A 580-amino-acid polypeptide reads, in one-letter code: Mitogen-activated protein kinase 12 (580 aa).

A disordered region spans residues 18–38; sequence RTASGSNQSSNAGEEAASSDL. Over residues 20-29 the composition is skewed to polar residues; that stretch reads ASGSNQSSNA. The 292-residue stretch at 87–378 folds into the Protein kinase domain; the sequence is YQIQEVIGKG…AEEALADPYF (292 aa). Residues 93-101 and K116 contribute to the ATP site; that span reads IGKGSYGVV. D213 (proton acceptor) is an active-site residue. T249 is modified (phosphothreonine). The short motif at 249 to 251 is the TXY element; it reads TDY. Position 251 is a phosphotyrosine (Y251). Positions 325-506 are required for kinase activity and nuclear localization; that stretch reads ARRYLSTMRK…SADSVARTTV (182 aa). Residues 458–580 form a disordered region; it reads YSKGERGSPL…LSEQVSRMHS (123 aa). Polar residues predominate over residues 502–543; the sequence is ARTTVSPPMSQDAQQHGSAGQNGVTSTDLSSRSYLKSASISA. Over residues 554–566 the composition is skewed to acidic residues; sequence EPEDDYISEEMEG.

Belongs to the protein kinase superfamily. CMGC Ser/Thr protein kinase family. MAP kinase subfamily. As to quaternary structure, interacts with EREBP1. In terms of processing, dually phosphorylated on Thr-249 and Tyr-251, which activates the enzyme. Phosphorylated on tyrosine residue.

It is found in the cytoplasm. It localises to the nucleus. It carries out the reaction L-seryl-[protein] + ATP = O-phospho-L-seryl-[protein] + ADP + H(+). The catalysed reaction is L-threonyl-[protein] + ATP = O-phospho-L-threonyl-[protein] + ADP + H(+). Activated by threonine and tyrosine phosphorylation. Activated in response to hydrogen peroxide, salicylic acid, jasmonic acid, ethylene, fungal elicitor and infection with rice blast fungus (M.grisea). May be involved in defense signaling pathway. Phosphorylates EREBP1 transcriptional activator in vitro. Enhances DNA-binding activity of EREBP1 to the GCC box element of pathogenesis-related (PR) gene promoters. The sequence is that of Mitogen-activated protein kinase 12 (MPK12) from Oryza sativa subsp. japonica (Rice).